Reading from the N-terminus, the 248-residue chain is Ubiquinone/menaquinone biosynthesis C-methyltransferase UbiE (248 aa).

Residues S68 and D92 each coordinate S-adenosyl-L-methionine.

Belongs to the class I-like SAM-binding methyltransferase superfamily. MenG/UbiE family.

The catalysed reaction is a 2-demethylmenaquinol + S-adenosyl-L-methionine = a menaquinol + S-adenosyl-L-homocysteine + H(+). It carries out the reaction a 2-methoxy-6-(all-trans-polyprenyl)benzene-1,4-diol + S-adenosyl-L-methionine = a 5-methoxy-2-methyl-3-(all-trans-polyprenyl)benzene-1,4-diol + S-adenosyl-L-homocysteine + H(+). It participates in quinol/quinone metabolism; menaquinone biosynthesis; menaquinol from 1,4-dihydroxy-2-naphthoate: step 2/2. The protein operates within cofactor biosynthesis; ubiquinone biosynthesis. In terms of biological role, methyltransferase required for the conversion of demethylmenaquinol (DMKH2) to menaquinol (MKH2) and the conversion of 2-polyprenyl-6-methoxy-1,4-benzoquinol (DDMQH2) to 2-polyprenyl-3-methyl-6-methoxy-1,4-benzoquinol (DMQH2). The protein is Ubiquinone/menaquinone biosynthesis C-methyltransferase UbiE of Rickettsia akari (strain Hartford).